Reading from the N-terminus, the 488-residue chain is Protein kinase C and casein kinase substrate in neurons 2 protein (488 aa).

In terms of domain architecture, F-BAR spans 11–282 (VEVSSDSFWE…SIKAADAVED (272 aa)). Residues 25 to 274 (KRTVKRIDDG…GIYRELEQSI (250 aa)) are a coiled coil. The residue at position 53 (Lys-53) is an N6-acetyllysine. Residues 163–176 (CKEEKLAVSREANS) are compositionally biased toward basic and acidic residues. The interval 163 to 183 (CKEEKLAVSREANSKADPSLN) is disordered. Ser-273 is subject to Phosphoserine. Phosphoserine; by PKC is present on Ser-315. The segment at 316–429 (RREKKKAADG…PFDEDTTSGT (114 aa)) is disordered. Over residues 329-364 (TGINQTGDQSGQNKPSSNLSVPSNPAQSTQLQSSYN) the composition is skewed to polar residues. Residues 364–366 (NPF) carry the NPF1 motif. The residue at position 375 (Ser-375) is a Phosphoserine; by IKKB. Polar residues predominate over residues 386–396 (NVSSYEKTQNY). At Ser-401 the chain carries Phosphoserine. Positions 406–418 (NNPFSSTDANGDS) are enriched in polar residues. The NPF2 signature appears at 407–409 (NPF). The NPF3 signature appears at 419-421 (NPF). One can recognise an SH3 domain in the interval 428 to 488 (GTEVRVRALY…YPANYVEAIQ (61 aa)). At Ser-448 the chain carries Phosphoserine.

Belongs to the PACSIN family. Homodimer. May form heterooligomers with other PACSINs. Interacts (via NPF motifs) with EHD1 (via EH domain). Interacts with EHD3. Interacts (via the SH3 domain) with MICALL1. Interacts with RAC1. Interacts (via SH3 domain) with DNM1, SYN1, SYNJ1 and WASL. Interacts with CAV1. Interacts with TRPV4. Forms a complex with EHD4 and MICALL1; the complex controls CDH5 trafficking and coordinates angiogenesis. Phosphorylated by casein kinase 2 (CK2) and protein kinase C (PKC). Phosphorylation by PKC probably decreases the membrane binding and tubulation capacities of PACSIN2, thereby modulating the lifetime of caveolae. In terms of tissue distribution, widely expressed (at protein level). Isoforms 1/3 are predominantly expressed in heart and in PC-12 cells, a pheochromocytoma cell line (at protein level). Isoforms 2/4 are widely expressed with highest levels in muscle, testis and brain (at protein level).

Its subcellular location is the cytoplasm. It is found in the cytoskeleton. The protein localises to the cytoplasmic vesicle membrane. It localises to the cell projection. The protein resides in the ruffle membrane. Its subcellular location is the early endosome. It is found in the recycling endosome membrane. The protein localises to the cell membrane. It localises to the membrane. The protein resides in the caveola. Its subcellular location is the cell junction. It is found in the adherens junction. Its function is as follows. Regulates the morphogenesis and endocytosis of caveolae. Lipid-binding protein that is able to promote the tubulation of the phosphatidic acid-containing membranes it preferentially binds. Plays a role in intracellular vesicle-mediated transport. Involved in the endocytosis of cell-surface receptors like the EGF receptor, contributing to its internalization in the absence of EGF stimulus. Facilitates endothelial front-rear polarity during migration by recruiting EHD4 and MICALL1 to asymmetric adherens junctions between leader and follower cells. This is Protein kinase C and casein kinase substrate in neurons 2 protein (Pacsin2) from Rattus norvegicus (Rat).